A 275-amino-acid chain; its full sequence is NH(3)-dependent NAD(+) synthetase (275 aa).

Position 46-53 (46-53 (GISGGQDS)) interacts with ATP. Asp-52 contacts Mg(2+). A deamido-NAD(+)-binding site is contributed by Arg-140. Thr-160 is an ATP binding site. Glu-165 contacts Mg(2+). Residues Lys-173 and Asp-180 each contribute to the deamido-NAD(+) site. 2 residues coordinate ATP: Lys-189 and Thr-211. Residue 260 to 261 (HK) coordinates deamido-NAD(+).

Belongs to the NAD synthetase family. In terms of assembly, homodimer.

The catalysed reaction is deamido-NAD(+) + NH4(+) + ATP = AMP + diphosphate + NAD(+) + H(+). It functions in the pathway cofactor biosynthesis; NAD(+) biosynthesis; NAD(+) from deamido-NAD(+) (ammonia route): step 1/1. Catalyzes the ATP-dependent amidation of deamido-NAD to form NAD. Uses ammonia as a nitrogen source. In Escherichia coli O45:K1 (strain S88 / ExPEC), this protein is NH(3)-dependent NAD(+) synthetase.